The following is a 928-amino-acid chain: Sodium/calcium exchanger 3 (928 aa).

A signal peptide spans 1–30; it reads MAWLRLQPLTSAFLHFGLVTFVLFLNCLRA. Over 31-73 the chain is Extracellular; sequence EAGDSGDVPSAGQNNESCSGSSDCKEGVILPIWYPENPSLGDK. Asparagine 45 carries an N-linked (GlcNAc...) asparagine glycan. A helical membrane pass occupies residues 74-94; sequence IARVIVYFVALIYMFLGVSII. The Cytoplasmic segment spans residues 95–147; the sequence is ADRFMASIEVITSQEREVTIKKPNGETSTTTIRVWNETVSNLTLMALGSSAPE. Residues 148-168 traverse the membrane as a helical segment; the sequence is ILLSLIEVCGHGFIAGDLGPS. Threonine 169 is a topological domain (extracellular). The chain crosses the membrane as a helical span at residues 170–190; the sequence is IVGSAAFNMFIIIGICVYVIP. Residues 191–201 lie on the Cytoplasmic side of the membrane; it reads DGETRKIKHLR. The chain crosses the membrane as a helical span at residues 202 to 222; the sequence is VFFVTAAWSIFAYIWLYMILA. The Extracellular portion of the chain corresponds to 223–230; sequence VFSPGVVQ. The chain crosses the membrane as a helical span at residues 231–251; sequence VWEGLLTLFFFPVCVLLAWVA. At 252–727 the chain is on the cytoplasmic side; that stretch reads DKRLLFYKYM…DESGEERLPS (476 aa). The tract at residues 253–272 is putative calmodulin-binding region; that stretch reads KRLLFYKYMHKKYRTDKHRG. Calx-beta domains are found at residues 390–485 and 519–618; these read EPED…VRLS and ATVT…VIEM. 14 residues coordinate Ca(2+): glutamate 409, aspartate 445, aspartate 470, aspartate 471, isoleucine 473, glutamate 475, glutamate 478, aspartate 525, aspartate 526, aspartate 527, glutamate 543, aspartate 579, aspartate 605, and glutamate 673. A helical transmembrane segment spans residues 728 to 748; sequence CFDYVMHFLTVFWKVLFACVP. Topologically, residues 749-755 are extracellular; sequence PTEYCHG. A helical transmembrane segment spans residues 756–776; the sequence is WACFVVSILIIGMLTAIIGDL. Residues 777–779 are Cytoplasmic-facing; sequence ASH. The helical transmembrane segment at 780-800 threads the bilayer; it reads FGCTIGLKDSVTAVVFVAFGT. Residues 801 to 829 are Extracellular-facing; sequence SVPDTFASKAAALQDVYADASIGNVTGSN. A glycan (N-linked (GlcNAc...) asparagine) is linked at asparagine 824. Residues 830-850 traverse the membrane as a helical segment; it reads AVNVFLGIGLAWSVAAIYWAM. Residues 851–861 are Cytoplasmic-facing; it reads QGQEFHVSAGT. The chain crosses the membrane as a helical span at residues 862–882; the sequence is LAFSVTLFTIFAFVCLSVLLY. Residues 883 to 904 are Extracellular-facing; that stretch reads RRRPHLGGELGGPRGCKLATTW. The helical transmembrane segment at 905–925 threads the bilayer; it reads LFVSLWLLYILFATLEAYCYI. Topologically, residues 926 to 928 are cytoplasmic; that stretch reads KGF.

Belongs to the Ca(2+):cation antiporter (CaCA) (TC 2.A.19) family. SLC8 subfamily. In terms of assembly, interacts with AKAP1. As to expression, detected in gray and white matter in the spinal cord. Detected in hippocampus neurons. Detected in brain cortex neurons. Detected in skeletal muscle (at protein level). Isoform 1 and isoform 2 are highly expressed in brain; levels are higher for isoform 2. Isoform 1 and isoform 2 are detected in soleus muscle; levels are higher for isoform 1. Detected in gastrocnemius muscle.

It is found in the cell membrane. It localises to the perikaryon. Its subcellular location is the cell projection. The protein localises to the dendrite. The protein resides in the dendritic spine. It is found in the sarcolemma. It localises to the cytoplasm. Its subcellular location is the sarcoplasm. The protein localises to the cell junction. The protein resides in the mitochondrion outer membrane. It is found in the perinuclear region. It localises to the endoplasmic reticulum membrane. It catalyses the reaction Ca(2+)(in) + 3 Na(+)(out) = Ca(2+)(out) + 3 Na(+)(in). Calcium transport is stimulated by cytoplasmic Ca(2+) and is inhibited by Na(+). Isoform 1 is more sensitive to stimulation by Ca(2+) than isoform 2. Isoform 2 is more sensitive to inactivation by Na(+). In terms of biological role, mediates the electrogenic exchange of Ca(2+) against Na(+) ions across the cell membrane, and thereby contributes to the regulation of cytoplasmic Ca(2+) levels and Ca(2+)-dependent cellular processes. Contributes to cellular Ca(2+) homeostasis in excitable cells, both in muscle and in brain. In a first phase, voltage-gated channels mediate the rapid increase of cytoplasmic Ca(2+) levels due to release of Ca(2+) stores from the endoplasmic reticulum. SLC8A3 mediates the export of Ca(2+) from the cell during the next phase, so that cytoplasmic Ca(2+) levels rapidly return to baseline. Contributes to Ca(2+) transport during excitation-contraction coupling in muscle. In neurons, contributes to the rapid decrease of cytoplasmic Ca(2+) levels back to baseline after neuronal activation, and thereby contributes to modulate synaptic plasticity, learning and memory. Required for normal oligodendrocyte differentiation and for normal myelination. Mediates Ca(2+) efflux from mitochondria and contributes to mitochondrial Ca(2+) ion homeostasis. Isoform 1 displays higher calcium exchanger activity than isoform 2, probably because isoform 1 has a lower threshold for activation by cytoplasmic Ca(2+). This chain is Sodium/calcium exchanger 3, found in Mus musculus (Mouse).